Consider the following 146-residue polypeptide: Cytochrome c-type biogenesis protein CcmE (146 aa).

At 1–7 (MQAKHQR) the chain is on the cytoplasmic side. Residues 8 to 28 (LILGIIALAAVIAAGFLALVA) form a helical; Signal-anchor for type II membrane protein membrane-spanning segment. At 29–146 (FKKQAAYFFT…AATQTTLQEK (118 aa)) the chain is on the periplasmic side. Positions 123 and 127 each coordinate heme.

This sequence belongs to the CcmE/CycJ family.

The protein localises to the cell inner membrane. In terms of biological role, heme chaperone required for the biogenesis of c-type cytochromes. Transiently binds heme delivered by CcmC and transfers the heme to apo-cytochromes in a process facilitated by CcmF and CcmH. This is Cytochrome c-type biogenesis protein CcmE from Zymomonas mobilis subsp. mobilis (strain ATCC 31821 / ZM4 / CP4).